A 374-amino-acid chain; its full sequence is PqqA peptide cyclase (374 aa).

The 218-residue stretch at 13 to 230 folds into the Radical SAM core domain; it reads VPAPIAMLAE…EAEARLRGTL (218 aa). Cysteine 27, cysteine 31, and cysteine 34 together coordinate [4Fe-4S] cluster.

It belongs to the radical SAM superfamily. PqqE family. As to quaternary structure, interacts with PqqD. The interaction is necessary for activity of PqqE. [4Fe-4S] cluster serves as cofactor.

It catalyses the reaction [PQQ precursor protein] + S-adenosyl-L-methionine = E-Y cross-linked-[PQQ precursor protein] + 5'-deoxyadenosine + L-methionine + H(+). It functions in the pathway cofactor biosynthesis; pyrroloquinoline quinone biosynthesis. Functionally, catalyzes the cross-linking of a glutamate residue and a tyrosine residue in the PqqA protein as part of the biosynthesis of pyrroloquinoline quinone (PQQ). The chain is PqqA peptide cyclase from Ruegeria pomeroyi (strain ATCC 700808 / DSM 15171 / DSS-3) (Silicibacter pomeroyi).